A 950-amino-acid polypeptide reads, in one-letter code: Bifunctional glutamine synthetase adenylyltransferase/adenylyl-removing enzyme (950 aa).

The tract at residues 1-440 (MLPLPSELQI…VFDHLIGDDA (440 aa)) is adenylyl removase. An adenylyl transferase region spans residues 449–950 (HGLYKSLWQD…KWLVAAPSDV (502 aa)).

Belongs to the GlnE family. The cofactor is Mg(2+).

The catalysed reaction is [glutamine synthetase]-O(4)-(5'-adenylyl)-L-tyrosine + phosphate = [glutamine synthetase]-L-tyrosine + ADP. It carries out the reaction [glutamine synthetase]-L-tyrosine + ATP = [glutamine synthetase]-O(4)-(5'-adenylyl)-L-tyrosine + diphosphate. Its function is as follows. Involved in the regulation of glutamine synthetase GlnA, a key enzyme in the process to assimilate ammonia. When cellular nitrogen levels are high, the C-terminal adenylyl transferase (AT) inactivates GlnA by covalent transfer of an adenylyl group from ATP to specific tyrosine residue of GlnA, thus reducing its activity. Conversely, when nitrogen levels are low, the N-terminal adenylyl removase (AR) activates GlnA by removing the adenylyl group by phosphorolysis, increasing its activity. The regulatory region of GlnE binds the signal transduction protein PII (GlnB) which indicates the nitrogen status of the cell. The polypeptide is Bifunctional glutamine synthetase adenylyltransferase/adenylyl-removing enzyme (Yersinia enterocolitica serotype O:8 / biotype 1B (strain NCTC 13174 / 8081)).